The following is a 535-amino-acid chain: KNR4/SMI1 homolog (535 aa).

The segment covering 354-363 (ERKLPEEPKR) has biased composition (basic and acidic residues). Residues 354–535 (ERKLPEEPKR…LKDDFENVAL (182 aa)) form a disordered region. Polar residues-rich tracts occupy residues 364–384 (TVSSSQGSQNTVEPAEQQETA), 397–407 (TSLSVDNTGTK), and 456–469 (ESTNAVENTETSQE). The span at 474–483 (TSEKPEEKPK) shows a compositional bias: basic and acidic residues. Positions 484 to 494 (KQSKKASKKKG) are enriched in basic residues. 2 stretches are compositionally biased toward basic and acidic residues: residues 495 to 509 (KKDEKKDTDSKTKEP) and 524 to 535 (EKLKDDFENVAL).

Belongs to the KNR4/SMI1 family.

The chain is KNR4/SMI1 homolog from Kluyveromyces lactis (strain ATCC 8585 / CBS 2359 / DSM 70799 / NBRC 1267 / NRRL Y-1140 / WM37) (Yeast).